Here is a 264-residue protein sequence, read N- to C-terminus: MAVGKNKRVSKGKKGGKKKIVDPFLKKEWYTLKAPVMFHVRNFGQTLVSKTQGTKLATDGLRGRIYEVSLADLNADEDQSYRKIKLCCEDIQGRNCLTNFHGTSVTRDKLCSLIRKNYSLIEAFTDVKTTDGYTLRMFCIGYTKRRPGQLKSTCYIRSSRTRVVRRKMIEVMQREASTTSMREVVKKIIPESIGKEIEKACKSVFPLQNVLIRKIKVLKKPKFDLTKLMEVHTDISEETGHATKVEESEEAANLLTKELDAQEA.

Belongs to the eukaryotic ribosomal protein eS1 family. In terms of assembly, component of the small ribosomal subunit. Mature ribosomes consist of a small (40S) and a large (60S) subunit. The 40S subunit contains about 33 different proteins and 1 molecule of RNA (18S). The 60S subunit contains about 49 different proteins and 3 molecules of RNA (25S, 5.8S and 5S).

The protein resides in the cytoplasm. The protein is Small ribosomal subunit protein eS1 of Babesia bovis.